The chain runs to 179 residues: Large ribosomal subunit protein uL22c (179 aa).

This sequence belongs to the universal ribosomal protein uL22 family. As to quaternary structure, part of the 50S ribosomal subunit.

Its subcellular location is the plastid. The protein localises to the chloroplast. Functionally, this protein binds specifically to 23S rRNA. In terms of biological role, the globular domain of the protein is located near the polypeptide exit tunnel on the outside of the subunit, while an extended beta-hairpin is found that lines the wall of the exit tunnel in the center of the 70S ribosome. The chain is Large ribosomal subunit protein uL22c (rpl22) from Ranunculus macranthus (Large buttercup).